Consider the following 62-residue polypeptide: Inner membrane protein p12 (62 aa).

Residues L16–M36 form a helical membrane-spanning segment.

It belongs to the asfivirus inner membrane protein p12 family. In terms of assembly, homomultimer; disulfide-linked. Not glycosylated.

The protein resides in the virion membrane. This chain is Inner membrane protein p12, found in African swine fever virus (isolate Pig/Kenya/KEN-50/1950) (ASFV).